The sequence spans 316 residues: N-acetyl-gamma-glutamyl-phosphate reductase (316 aa).

Cys-136 is an active-site residue.

Belongs to the NAGSA dehydrogenase family. Type 1 subfamily.

It is found in the cytoplasm. It catalyses the reaction N-acetyl-L-glutamate 5-semialdehyde + phosphate + NADP(+) = N-acetyl-L-glutamyl 5-phosphate + NADPH + H(+). It functions in the pathway amino-acid biosynthesis; L-arginine biosynthesis; N(2)-acetyl-L-ornithine from L-glutamate: step 3/4. Functionally, catalyzes the NADPH-dependent reduction of N-acetyl-5-glutamyl phosphate to yield N-acetyl-L-glutamate 5-semialdehyde. The polypeptide is N-acetyl-gamma-glutamyl-phosphate reductase (Xanthomonas campestris pv. campestris (strain B100)).